The primary structure comprises 306 residues: Curved DNA-binding protein (306 aa).

The J domain occupies 5 to 69; it reads DYYAIMGVKP…QRRAEYDQMW (65 aa).

The protein localises to the cytoplasm. It is found in the nucleoid. In terms of biological role, DNA-binding protein that preferentially recognizes a curved DNA sequence. It is probably a functional analog of DnaJ; displays overlapping activities with DnaJ, but functions under different conditions, probably acting as a molecular chaperone in an adaptive response to environmental stresses other than heat shock. Lacks autonomous chaperone activity; binds native substrates and targets them for recognition by DnaK. Its activity is inhibited by the binding of CbpM. The chain is Curved DNA-binding protein from Escherichia coli O8 (strain IAI1).